Consider the following 274-residue polypeptide: Putative hydro-lyase Veis_4744 (274 aa).

The protein belongs to the D-glutamate cyclase family.

The protein is Putative hydro-lyase Veis_4744 of Verminephrobacter eiseniae (strain EF01-2).